Consider the following 404-residue polypeptide: Cysteine desulfurase IscS (404 aa).

Residues 75 to 76, N155, Q183, and 203 to 205 each bind pyridoxal 5'-phosphate; these read AT and SAH. The residue at position 206 (K206) is an N6-(pyridoxal phosphate)lysine. Pyridoxal 5'-phosphate is bound at residue T243. The active-site Cysteine persulfide intermediate is C328. C328 is a binding site for [2Fe-2S] cluster.

The protein belongs to the class-V pyridoxal-phosphate-dependent aminotransferase family. NifS/IscS subfamily. In terms of assembly, homodimer. Forms a heterotetramer with IscU, interacts with other sulfur acceptors. Pyridoxal 5'-phosphate serves as cofactor.

The protein localises to the cytoplasm. It catalyses the reaction (sulfur carrier)-H + L-cysteine = (sulfur carrier)-SH + L-alanine. It functions in the pathway cofactor biosynthesis; iron-sulfur cluster biosynthesis. Its function is as follows. Master enzyme that delivers sulfur to a number of partners involved in Fe-S cluster assembly, tRNA modification or cofactor biosynthesis. Catalyzes the removal of elemental sulfur atoms from cysteine to produce alanine. Functions as a sulfur delivery protein for Fe-S cluster synthesis onto IscU, an Fe-S scaffold assembly protein, as well as other S acceptor proteins. The sequence is that of Cysteine desulfurase IscS from Aeromonas hydrophila subsp. hydrophila (strain ATCC 7966 / DSM 30187 / BCRC 13018 / CCUG 14551 / JCM 1027 / KCTC 2358 / NCIMB 9240 / NCTC 8049).